A 368-amino-acid polypeptide reads, in one-letter code: tRNA-specific 2-thiouridylase MnmA (368 aa).

ATP contacts are provided by residues 12–19 and Met-38; that span reads GMSGGVDS. The tract at residues 98–100 is interaction with target base in tRNA; that stretch reads NPD. Cys-103 functions as the Nucleophile in the catalytic mechanism. A disulfide bridge links Cys-103 with Cys-200. An ATP-binding site is contributed by Gly-128. The tract at residues 150–152 is interaction with tRNA; that stretch reads KDQ. Residue Cys-200 is the Cysteine persulfide intermediate of the active site. The interaction with tRNA stretch occupies residues 311 to 312; sequence RY.

This sequence belongs to the MnmA/TRMU family.

Its subcellular location is the cytoplasm. It catalyses the reaction S-sulfanyl-L-cysteinyl-[protein] + uridine(34) in tRNA + AH2 + ATP = 2-thiouridine(34) in tRNA + L-cysteinyl-[protein] + A + AMP + diphosphate + H(+). In terms of biological role, catalyzes the 2-thiolation of uridine at the wobble position (U34) of tRNA, leading to the formation of s(2)U34. The sequence is that of tRNA-specific 2-thiouridylase MnmA from Aeromonas salmonicida (strain A449).